The primary structure comprises 401 residues: Formate dehydrogenase (401 aa).

Residues I123 and N147 each contribute to the substrate site. NAD(+)-binding positions include S148, 202 to 203 (RI), D222, 257 to 261 (PLHPE), T283, D309, 333 to 336 (HISG), and S381.

It belongs to the D-isomer specific 2-hydroxyacid dehydrogenase family. FDH subfamily. As to quaternary structure, homodimer.

Its subcellular location is the cytoplasm. The catalysed reaction is formate + NAD(+) = CO2 + NADH. In terms of biological role, catalyzes the NAD(+)-dependent oxidation of formate to carbon dioxide. Formate oxidation is the final step in the methanol oxidation pathway in methylotrophic microorganisms. Has a role in the detoxification of exogenous formate in non-methylotrophic organisms. The chain is Formate dehydrogenase from Pseudomonas sp. (strain 101) (Achromobacter parvulus T1).